The following is a 248-amino-acid chain: Agamous-like MADS-box protein AGL1 (248 aa).

The MADS-box domain occupies R18 to Y72. One can recognise a K-box domain in the interval T102 to L192.

As to quaternary structure, interacts with AGL15 and AGL16.

Its subcellular location is the nucleus. Functionally, probable transcription factor. Interacts genetically with TT16/AGL32 in a partially antagonistic manner during flower development. Is essential for the coordination of cell divisions in ovule, seed coat development and endosperm formation. This chain is Agamous-like MADS-box protein AGL1 (AGL1), found in Arabidopsis thaliana (Mouse-ear cress).